Consider the following 431-residue polypeptide: Adenylosuccinate synthetase (431 aa).

GTP contacts are provided by residues 12–18 (GDEGKGK) and 40–42 (GHT). Asp-13 acts as the Proton acceptor in catalysis. Mg(2+) is bound by residues Asp-13 and Gly-40. IMP-binding positions include 13-16 (DEGK), 38-41 (NAGH), Thr-130, Arg-144, Gln-225, Thr-240, and Arg-304. Catalysis depends on His-41, which acts as the Proton donor. 300 to 306 (ATTGRPR) is a substrate binding site. Residues Arg-306, 332–334 (KLD), and 414–416 (SVG) contribute to the GTP site.

Belongs to the adenylosuccinate synthetase family. Homodimer. The cofactor is Mg(2+).

The protein localises to the cytoplasm. The enzyme catalyses IMP + L-aspartate + GTP = N(6)-(1,2-dicarboxyethyl)-AMP + GDP + phosphate + 2 H(+). It functions in the pathway purine metabolism; AMP biosynthesis via de novo pathway; AMP from IMP: step 1/2. Functionally, plays an important role in the de novo pathway of purine nucleotide biosynthesis. Catalyzes the first committed step in the biosynthesis of AMP from IMP. This is Adenylosuccinate synthetase from Geotalea uraniireducens (strain Rf4) (Geobacter uraniireducens).